Reading from the N-terminus, the 243-residue chain is Probable transcriptional regulatory protein Patl_0550 (243 aa).

This sequence belongs to the TACO1 family.

The protein localises to the cytoplasm. The chain is Probable transcriptional regulatory protein Patl_0550 from Pseudoalteromonas atlantica (strain T6c / ATCC BAA-1087).